The sequence spans 364 residues: Uroporphyrinogen decarboxylase (364 aa).

Positions 34, 36, 38, 47, 83, 161, 216, and 336 each coordinate coproporphyrinogen I. Coproporphyrinogen III contacts are provided by Arg34, Ala36, and Arg38. The coproporphyrinogen III site is built by Asp83, Tyr161, Ser216, and His336.

Belongs to the uroporphyrinogen decarboxylase family. In terms of assembly, homodimer.

Its subcellular location is the cytoplasm. The protein resides in the cytosol. The enzyme catalyses uroporphyrinogen III + 4 H(+) = coproporphyrinogen III + 4 CO2. It carries out the reaction uroporphyrinogen I + 4 H(+) = coproporphyrinogen I + 4 CO2. It functions in the pathway porphyrin-containing compound metabolism; protoporphyrin-IX biosynthesis; coproporphyrinogen-III from 5-aminolevulinate: step 4/4. Its function is as follows. Catalyzes the sequential decarboxylation of the four acetate side chains of uroporphyrinogen to form coproporphyrinogen and participates in the fifth step in the heme biosynthetic pathway. Isomer I or isomer III of uroporphyrinogen may serve as substrate, but only coproporphyrinogen III can ultimately be converted to heme. In vitro also decarboxylates pentacarboxylate porphyrinogen I. This chain is Uroporphyrinogen decarboxylase, found in Rattus norvegicus (Rat).